Here is a 282-residue protein sequence, read N- to C-terminus: uncharacterized protein (282 aa).

The region spanning 1–77 (MNGLLRIRQR…LALSEALASQ (77 aa)) is the HTH rpiR-type domain. Residues 37–56 (SQQLANEAGVSQSSVVKFAQ) constitute a DNA-binding region (H-T-H motif). The SIS domain occupies 125–265 (CVTMLRSARR…FIALIQQDLE (141 aa)).

This is an uncharacterized protein from Escherichia coli (strain K12).